Consider the following 170-residue polypeptide: Adenine phosphoribosyltransferase (170 aa).

It belongs to the purine/pyrimidine phosphoribosyltransferase family. As to quaternary structure, homodimer.

It localises to the cytoplasm. It catalyses the reaction AMP + diphosphate = 5-phospho-alpha-D-ribose 1-diphosphate + adenine. It participates in purine metabolism; AMP biosynthesis via salvage pathway; AMP from adenine: step 1/1. Catalyzes a salvage reaction resulting in the formation of AMP, that is energically less costly than de novo synthesis. This is Adenine phosphoribosyltransferase from Bacillus cereus (strain G9842).